The primary structure comprises 748 residues: Junctophilin-3 (748 aa).

Topologically, residues 1 to 727 (MSSGGRFNFD…LKSSTGSAPI (727 aa)) are cytoplasmic. 6 MORN repeats span residues 15–37 (YCGG…KGQG), 39–60 (YTGS…SGNT), 61–82 (YQGT…GKWV), 83–105 (YKGE…GNGA), 107–129 (YEGT…DGGT), and 130–152 (YQGQ…PYGM). The tract at residues 230-259 (SKSSLASQRSKQSSFRSEAGMSTVSSTASD) is disordered. Residues 231-244 (KSSLASQRSKQSSF) are compositionally biased toward low complexity. Over residues 249–259 (GMSTVSSTASD) the composition is skewed to polar residues. MORN repeat units follow at residues 288-310 (YVGE…DGLK) and 311-333 (YEGE…DGTK). The segment at 416-496 (AKEFSPSFQH…TPPPAPAARN (81 aa)) is disordered. Position 440 is a phosphoserine (S440). The span at 448–457 (STGTPLQQES) shows a compositional bias: polar residues. At T451 the chain carries Phosphothreonine. Phosphoserine is present on S457. A Phosphothreonine modification is found at T471. Phosphoserine occurs at positions 475 and 506. Disordered regions lie at residues 526–597 (CARS…SPGG) and 624–649 (HPQK…EDRG). Positions 639-649 (LGDDHRPEDRG) are enriched in basic and acidic residues. 2 positions are modified to phosphoserine: S703 and S710. A helical; Anchor for type IV membrane protein membrane pass occupies residues 728-748 (LVVMVILLNIGVAILFINFFI).

This sequence belongs to the junctophilin family. Specifically expressed in brain.

It is found in the cell membrane. It localises to the endoplasmic reticulum membrane. Junctophilins contribute to the formation of junctional membrane complexes (JMCs) which link the plasma membrane with the endoplasmic or sarcoplasmic reticulum in excitable cells. Provides a structural foundation for functional cross-talk between the cell surface and intracellular calcium release channels. JPH3 is brain-specific and appears to have an active role in certain neurons involved in motor coordination and memory. The sequence is that of Junctophilin-3 (JPH3) from Homo sapiens (Human).